We begin with the raw amino-acid sequence, 416 residues long: RNA polymerase sigma-C factor (416 aa).

The Polymerase core binding signature appears at 205 to 218 (DLVQEGTLGLERAV). Positions 374 to 393 (LAEIGRALDLSRERVRQIES) form a DNA-binding region, H-T-H motif.

The protein belongs to the sigma-70 factor family.

Sigma factors are initiation factors that promote the attachment of RNA polymerase to specific initiation sites and are then released. In Nostoc sp. (strain PCC 7120 / SAG 25.82 / UTEX 2576), this protein is RNA polymerase sigma-C factor (sigC).